A 588-amino-acid chain; its full sequence is Cation channel sperm-associated protein 2 (588 aa).

Residues Met-1–Ser-106 are Cytoplasmic-facing. The helical transmembrane segment at Val-107–Leu-129 threads the bilayer. Topologically, residues Met-130–Trp-138 are extracellular. A helical transmembrane segment spans residues Pro-139–Leu-164. Residues Ala-165–Asp-173 lie on the Cytoplasmic side of the membrane. The helical transmembrane segment at Ala-174–Pro-198 threads the bilayer. At Ala-199–Ser-201 the chain is on the extracellular side. The chain crosses the membrane as a helical span at residues Val-202–Ala-220. The Cytoplasmic portion of the chain corresponds to Arg-221–Lys-237. The chain crosses the membrane as a helical span at residues Ser-238–Phe-260. Residues Phe-261 to Ser-279 lie on the Extracellular side of the membrane. The helical; Pore-forming intramembrane region spans Asp-280–Phe-292. The Extracellular portion of the chain corresponds to Thr-293–Arg-312. Residues Val-313–Val-339 form a helical membrane-spanning segment. Residues Thr-340–Lys-588 lie on the Cytoplasmic side of the membrane. Positions Ser-376 to His-512 are disordered. A compositionally biased stretch (acidic residues) spans Asp-390–Ser-439. Basic and acidic residues predominate over residues Glu-440–Ala-502.

The protein belongs to the cation channel sperm-associated (TC 1.A.1.19) family. In terms of assembly, component of the CatSper complex or CatSpermasome composed of the core pore-forming members CATSPER1, CATSPER2, CATSPER3 and CATSPER4 as well as auxiliary members CATSPERB, CATSPERG2, CATSPERD, CATSPERE, CATSPERZ, C2CD6/CATSPERT, SLCO6C1, TMEM249, TMEM262 and EFCAB9. HSPA1 may be an additional auxiliary complex member. The core complex members CATSPER1, CATSPER2, CATSPER3 and CATSPER4 form a heterotetrameric channel. The auxiliary CATSPERB, CATSPERG2, CATSPERD and CATSPERE subunits form a pavilion-like structure over the pore which stabilizes the complex through interactions with CATSPER4, CATSPER3, CATSPER1 and CATSPER2 respectively. SLCO6C1 interacts with CATSPERE and TMEM262/CATSPERH interacts with CATSPERB, further stabilizing the complex. C2CD6/CATSPERT interacts at least with CATSPERD and is required for targeting the CatSper complex in the flagellar membrane. Interacts with Ca(v)3.3/CACNA1I, leading to suppression of T-type calcium channel activity. As to expression, testis-specific.

It localises to the cell projection. The protein localises to the cilium. The protein resides in the flagellum membrane. It catalyses the reaction Ca(2+)(in) = Ca(2+)(out). With respect to regulation, in contrast to the human ortholog, not activated by progesterone. Activated by intracellular alkalinization. Pore-forming subunit of the CatSper complex, a sperm-specific voltage-gated calcium channel that plays a central role in sperm cell hyperactivation. Controls calcium entry to mediate the hyperactivated motility, a step needed for sperm motility which is essential late in the preparation of sperm for fertilization. The polypeptide is Cation channel sperm-associated protein 2 (Catsper2) (Mus musculus (Mouse)).